The following is a 210-amino-acid chain: Large ribosomal subunit protein uL3 (210 aa).

It belongs to the universal ribosomal protein uL3 family. As to quaternary structure, part of the 50S ribosomal subunit. Forms a cluster with proteins L14 and L19.

Its function is as follows. One of the primary rRNA binding proteins, it binds directly near the 3'-end of the 23S rRNA, where it nucleates assembly of the 50S subunit. The sequence is that of Large ribosomal subunit protein uL3 from Pediococcus pentosaceus (strain ATCC 25745 / CCUG 21536 / LMG 10740 / 183-1w).